The primary structure comprises 156 residues: 17.7 kDa class II heat shock protein (156 aa).

Residues 39–156 (DAKAMAATPA…KPKTIQVQVA (118 aa)) enclose the sHSP domain.

Belongs to the small heat shock protein (HSP20) family. In terms of assembly, may form oligomeric structures.

The protein resides in the cytoplasm. This chain is 17.7 kDa class II heat shock protein (HSP17.7), found in Arabidopsis thaliana (Mouse-ear cress).